A 184-amino-acid polypeptide reads, in one-letter code: UPF0149 protein PA14_69010 (184 aa).

The protein belongs to the UPF0149 family.

In Pseudomonas aeruginosa (strain UCBPP-PA14), this protein is UPF0149 protein PA14_69010.